Here is a 258-residue protein sequence, read N- to C-terminus: UPF0246 protein LHK_02295 (258 aa).

It belongs to the UPF0246 family.

In Laribacter hongkongensis (strain HLHK9), this protein is UPF0246 protein LHK_02295.